The chain runs to 326 residues: Beta-ketoacyl-[acyl-carrier-protein] synthase III (326 aa).

Active-site residues include cysteine 112 and histidine 251. Positions 252–256 are ACP-binding; that stretch reads QANSR. The active site involves asparagine 281.

Belongs to the thiolase-like superfamily. FabH family. In terms of assembly, homodimer.

It is found in the cytoplasm. It carries out the reaction malonyl-[ACP] + acetyl-CoA + H(+) = 3-oxobutanoyl-[ACP] + CO2 + CoA. It participates in lipid metabolism; fatty acid biosynthesis. Functionally, catalyzes the condensation reaction of fatty acid synthesis by the addition to an acyl acceptor of two carbons from malonyl-ACP. Catalyzes the first condensation reaction which initiates fatty acid synthesis and may therefore play a role in governing the total rate of fatty acid production. Possesses both acetoacetyl-ACP synthase and acetyl transacylase activities. Its substrate specificity determines the biosynthesis of branched-chain and/or straight-chain of fatty acids. In Clostridium botulinum (strain ATCC 19397 / Type A), this protein is Beta-ketoacyl-[acyl-carrier-protein] synthase III.